The sequence spans 287 residues: Inhibitory synaptic factor 1 (287 aa).

Residues 1 to 22 (MSQSRAPAREPSETPSQREQIR) are disordered. Residues 25-58 (MKMVIQQLEGILKELKDVAHELREVVGQIDKLTS) adopt a coiled-coil conformation. Disordered regions lie at residues 113 to 174 (RRSA…GTRE) and 189 to 287 (CDDD…NKDL). The segment covering 153-167 (EEASSSTHSQSQKTS) has biased composition (low complexity). Over residues 189-209 (CDDDEDEDEDEDGRDEEEDKL) the composition is skewed to acidic residues. The span at 259–274 (RNSSTQTVSDKSTQTL) shows a compositional bias: polar residues.

This sequence belongs to the INSYN1 family.

The protein localises to the postsynaptic density. May be a component of the protein machinery at the inhibitory synapses, probably acting as a scaffold. The sequence is that of Inhibitory synaptic factor 1 from Danio rerio (Zebrafish).